Here is a 417-residue protein sequence, read N- to C-terminus: UDP-N-acetylmuramoylalanine--D-glutamate ligase (417 aa).

108–114 serves as a coordination point for ATP; it reads GSNGKTT.

Belongs to the MurCDEF family.

It localises to the cytoplasm. It carries out the reaction UDP-N-acetyl-alpha-D-muramoyl-L-alanine + D-glutamate + ATP = UDP-N-acetyl-alpha-D-muramoyl-L-alanyl-D-glutamate + ADP + phosphate + H(+). It functions in the pathway cell wall biogenesis; peptidoglycan biosynthesis. In terms of biological role, cell wall formation. Catalyzes the addition of glutamate to the nucleotide precursor UDP-N-acetylmuramoyl-L-alanine (UMA). The sequence is that of UDP-N-acetylmuramoylalanine--D-glutamate ligase from Chlamydia pneumoniae (Chlamydophila pneumoniae).